A 248-amino-acid polypeptide reads, in one-letter code: Small ribosomal subunit protein eS1 (248 aa).

Residues 1–21 (MAVGKDKRISKGKKGGKKKIV) form a disordered region.

Belongs to the eukaryotic ribosomal protein eS1 family. Component of the small ribosomal subunit. Mature ribosomes consist of a small (40S) and a large (60S) subunit. The 40S subunit contains about 33 different proteins and 1 molecule of RNA (18S). The 60S subunit contains about 49 different proteins and 3 molecules of RNA (25S, 5.8S and 5S).

The protein localises to the cytoplasm. The sequence is that of Small ribosomal subunit protein eS1 from Syntrichia ruralis (Great hairy screw-moss).